The following is a 526-amino-acid chain: Bifunctional purine biosynthesis protein PurH (526 aa).

The MGS-like domain occupies 15–161 (DVVPIRRALI…KNHANVAIVV (147 aa)).

It belongs to the PurH family.

The catalysed reaction is (6R)-10-formyltetrahydrofolate + 5-amino-1-(5-phospho-beta-D-ribosyl)imidazole-4-carboxamide = 5-formamido-1-(5-phospho-D-ribosyl)imidazole-4-carboxamide + (6S)-5,6,7,8-tetrahydrofolate. It carries out the reaction IMP + H2O = 5-formamido-1-(5-phospho-D-ribosyl)imidazole-4-carboxamide. The protein operates within purine metabolism; IMP biosynthesis via de novo pathway; 5-formamido-1-(5-phospho-D-ribosyl)imidazole-4-carboxamide from 5-amino-1-(5-phospho-D-ribosyl)imidazole-4-carboxamide (10-formyl THF route): step 1/1. It functions in the pathway purine metabolism; IMP biosynthesis via de novo pathway; IMP from 5-formamido-1-(5-phospho-D-ribosyl)imidazole-4-carboxamide: step 1/1. The protein is Bifunctional purine biosynthesis protein PurH of Leifsonia xyli subsp. xyli (strain CTCB07).